The primary structure comprises 244 residues: MPLILLPAVDVVEGRAVRLVQGKAGSETEYGSALDAALGWQRDGAEWIHLVDLDAAFGRGSNRELLAEVVGKLDVAVELSGGIRDDDSLAAALATGCARVNLGTAALENPQWCARMIAEHGEKVAVGLDVQIVGGKHRLRGRGWETDGGDLWEVLQRLDSEGCSRYVVTDVTKDGTLAGPNLELLAGVAGRTEAPVIASGGVSSLDDLRAIATLTGQGVEGAIVGKALYAGRFTLPQALTAVRE.

Asp10 serves as the catalytic Proton acceptor. Asp129 (proton donor) is an active-site residue.

The protein belongs to the HisA/HisF family.

It localises to the cytoplasm. It carries out the reaction 1-(5-phospho-beta-D-ribosyl)-5-[(5-phospho-beta-D-ribosylamino)methylideneamino]imidazole-4-carboxamide = 5-[(5-phospho-1-deoxy-D-ribulos-1-ylimino)methylamino]-1-(5-phospho-beta-D-ribosyl)imidazole-4-carboxamide. It catalyses the reaction N-(5-phospho-beta-D-ribosyl)anthranilate = 1-(2-carboxyphenylamino)-1-deoxy-D-ribulose 5-phosphate. It functions in the pathway amino-acid biosynthesis; L-histidine biosynthesis; L-histidine from 5-phospho-alpha-D-ribose 1-diphosphate: step 4/9. The protein operates within amino-acid biosynthesis; L-tryptophan biosynthesis; L-tryptophan from chorismate: step 3/5. Its function is as follows. Involved in both the histidine and tryptophan biosynthetic pathways. The chain is Phosphoribosyl isomerase A from Mycobacterium ulcerans (strain Agy99).